We begin with the raw amino-acid sequence, 513 residues long: ATP synthase subunit alpha (513 aa).

169 to 176 (GDRQTGKT) is an ATP binding site.

Belongs to the ATPase alpha/beta chains family. F-type ATPases have 2 components, CF(1) - the catalytic core - and CF(0) - the membrane proton channel. CF(1) has five subunits: alpha(3), beta(3), gamma(1), delta(1), epsilon(1). CF(0) has three main subunits: a(1), b(2) and c(9-12). The alpha and beta chains form an alternating ring which encloses part of the gamma chain. CF(1) is attached to CF(0) by a central stalk formed by the gamma and epsilon chains, while a peripheral stalk is formed by the delta and b chains.

It is found in the cell inner membrane. The enzyme catalyses ATP + H2O + 4 H(+)(in) = ADP + phosphate + 5 H(+)(out). Its function is as follows. Produces ATP from ADP in the presence of a proton gradient across the membrane. The alpha chain is a regulatory subunit. The polypeptide is ATP synthase subunit alpha (Ralstonia nicotianae (strain ATCC BAA-1114 / GMI1000) (Ralstonia solanacearum)).